The primary structure comprises 307 residues: Regulating synaptic membrane exocytosis protein 3 (307 aa).

Residues 86-120 (STETGIAVEMRSRVTRQGSRESTDGSTNSNSSEGT) are disordered. The span at 109 to 119 (DGSTNSNSSEG) shows a compositional bias: polar residues. In terms of domain architecture, C2 spans 155-273 (PMGDVHIAIM…DLSAAVTGWY (119 aa)). Phosphoserine is present on residues Ser-294 and Ser-297.

In terms of assembly, binds PPFIA3. Does not bind RAB3.

Its subcellular location is the synapse. Functionally, regulates synaptic membrane exocytosis. This is Regulating synaptic membrane exocytosis protein 3 (Rims3) from Mus musculus (Mouse).